The chain runs to 146 residues: Hemoglobin subunit beta (146 aa).

Val1 is subject to N-acetylvaline. A Globin domain is found at 2 to 146; the sequence is HLTADEKVSL…VANALAHKYH (145 aa). Ser44 carries the phosphoserine modification. Lys59 carries the post-translational modification N6-acetyllysine. Position 63 (His63) interacts with heme b. At Lys82 the chain carries N6-acetyllysine. His92 lines the heme b pocket. Residue Cys93 is modified to S-nitrosocysteine. At Lys144 the chain carries N6-acetyllysine.

This sequence belongs to the globin family. In terms of assembly, heterotetramer of two alpha chains and two beta chains. In terms of tissue distribution, red blood cells.

Functionally, involved in oxygen transport from the lung to the various peripheral tissues. This chain is Hemoglobin subunit beta, found in Tamias striatus (Eastern chipmunk).